The chain runs to 347 residues: Protein RecA (347 aa).

64–71 (GPESSGKT) lines the ATP pocket. A disordered region spans residues 328–347 (DKVDEDKTEEEASQESLDLK).

It belongs to the RecA family.

It is found in the cytoplasm. Can catalyze the hydrolysis of ATP in the presence of single-stranded DNA, the ATP-dependent uptake of single-stranded DNA by duplex DNA, and the ATP-dependent hybridization of homologous single-stranded DNAs. It interacts with LexA causing its activation and leading to its autocatalytic cleavage. This is Protein RecA from Oceanobacillus iheyensis (strain DSM 14371 / CIP 107618 / JCM 11309 / KCTC 3954 / HTE831).